Consider the following 338-residue polypeptide: mRNA decay activator protein ZFP36L1 (338 aa).

The tract at residues 1 to 111 (MTTTLVSATI…QKQPGGGQVN (111 aa)) is necessary and sufficient for the association with mRNA decay enzymes and mRNA decay activation. Phosphoserine; by MAPKAPK2 is present on S54. Residue S90 is modified to Phosphoserine; by PKB/AKT1. S92 bears the Phosphoserine; by PKB/AKT1 and MAPKAPK2 mark. The disordered stretch occupies residues 93–113 (EGGERLLPTQKQPGGGQVNSS). C3H1-type zinc fingers lie at residues 114–142 (RYKT…HGIH) and 152–180 (KYKT…HNAE). The necessary for mRNA decay activation stretch occupies residues 185–338 (LAGARDLSAD…IFSRLSISDD (154 aa)). S203 carries the phosphoserine; by PKB/AKT1 and MAPKAPK2 modification. The interval 273–338 (SPTTFLFRPM…IFSRLSISDD (66 aa)) is disordered. The segment covering 296 to 318 (QDSLSDQEGYLSSSSSSHSGSDS) has biased composition (low complexity). Phosphoserine is present on S318. At S334 the chain carries Phosphoserine; by RPS6KA1.

Associates with the cytoplasmic CCR4-NOT deadenylase and RNA exosome complexes to trigger ARE-containing mRNA deadenylation and decay processes. Interacts with CNOT1. Interacts (via N-terminus) with CNOT6. Interacts with CNOT7; this interaction is inhibited in response to phorbol 12-myristate 13-acetate (PMA) treatment in a p38 MAPK-dependent manner. Interacts with DCP1A. Interacts (via N-terminus) with DCP2. Interacts (via N-terminus) with EXOSC2. Interacts with XRN1. Interacts (via phosphorylated form) with YWHAB; this interaction occurs in a protein kinase AKT1-dependent manner. Interacts (via phosphorylated form) with YWHAZ; this interaction occurs in a p38 MAPK- and AKT-signaling pathways. Post-translationally, phosphorylated. Phosphorylated by RPS6KA1 at Ser-334 upon phorbol 12-myristate 13-acetate (PMA) treatment; this phosphorylation results in dissociation of the CCR4-NOT deadenylase complex and induces p38 MAPK-mediated stabilization of the low-density lipoprotein receptor LDLR mRNA. Phosphorylated by protein kinase AKT1 at Ser-92 and Ser-203 in response to insulin; these phosphorylations stabilize ZFP36L1, increase the association with 14-3-3 proteins and mediate ARE-containing mRNA stabilization. AKT1-mediated phosphorylation at Ser-92 does not impair ARE-containing RNA-binding. Phosphorylated at Ser-54, Ser-92 and Ser-203 by MAPKAPK2; these phosphorylations increase the association with 14-3-3 proteins and mediate ARE-containing mRNA stabilization in a protein kinase AKT1-independent manner. MAPKAPK2-mediated phosphorylations at Ser-54, Ser-92 and Ser-203 do not impair ARE-containing RNA-binding. Phosphorylations increase the association with 14-3-3 proteins and mediate ARE-containing mRNA stabilization during early adipogenesis in a p38 MAPK- and AKT-dependent manner. In terms of processing, ubiquitinated. Ubiquitination leads to proteasomal degradation, a process inhibited by phosphorylations at Ser-90, Ser-92 and Ser-203. In terms of tissue distribution, expressed mainly in the basal epidermal layer, weakly in the suprabasal epidermal layers. Expressed in epidermal keratinocytes (at protein level). Expressed in osteoblasts.

Its subcellular location is the nucleus. It localises to the cytoplasm. It is found in the cytoplasmic granule. The protein resides in the P-body. In terms of biological role, zinc-finger RNA-binding protein that destabilizes several cytoplasmic AU-rich element (ARE)-containing mRNA transcripts by promoting their poly(A) tail removal or deadenylation, and hence provide a mechanism for attenuating protein synthesis. Acts as a 3'-untranslated region (UTR) ARE mRNA-binding adapter protein to communicate signaling events to the mRNA decay machinery. Functions by recruiting the CCR4-NOT deadenylase complex and components of the cytoplasmic RNA decay machinery to the bound ARE-containing mRNAs, and hence promotes ARE-mediated mRNA deadenylation and decay processes. Also induces the degradation of ARE-containing mRNAs even in absence of poly(A) tail. Binds to 3'-UTR ARE of numerous mRNAs. Positively regulates early adipogenesis by promoting ARE-mediated mRNA decay of immediate early genes (IEGs). Promotes ARE-mediated mRNA decay of mineralocorticoid receptor NR3C2 mRNA in response to hypertonic stress. Negatively regulates hematopoietic/erythroid cell differentiation by promoting ARE-mediated mRNA decay of the transcription factor STAT5B mRNA. Positively regulates monocyte/macrophage cell differentiation by promoting ARE-mediated mRNA decay of the cyclin-dependent kinase CDK6 mRNA. Promotes degradation of ARE-containing pluripotency-associated mRNAs in embryonic stem cells (ESCs), such as NANOG, through a fibroblast growth factor (FGF)-induced MAPK-dependent signaling pathway, and hence attenuates ESC self-renewal and positively regulates mesendoderm differentiation. May play a role in mediating pro-apoptotic effects in malignant B-cells by promoting ARE-mediated mRNA decay of BCL2 mRNA. In association with ZFP36L2 maintains quiescence on developing B lymphocytes by promoting ARE-mediated decay of several mRNAs encoding cell cycle regulators that help B cells progress through the cell cycle, and hence ensuring accurate variable-diversity-joining (VDJ) recombination and functional immune cell formation. Together with ZFP36L2 is also necessary for thymocyte development and prevention of T-cell acute lymphoblastic leukemia (T-ALL) transformation by promoting ARE-mediated mRNA decay of the oncogenic transcription factor NOTCH1 mRNA. Participates in the delivery of target ARE-mRNAs to processing bodies (PBs). In addition to its cytosolic mRNA-decay function, plays a role in the regulation of nuclear mRNA 3'-end processing; modulates mRNA 3'-end maturation efficiency of the DLL4 mRNA through binding with an ARE embedded in a weak noncanonical polyadenylation (poly(A)) signal in endothelial cells. Also involved in the regulation of stress granule (SG) and P-body (PB) formation and fusion. Plays a role in vasculogenesis and endocardial development. Plays a role in the regulation of keratinocyte proliferation, differentiation and apoptosis. Plays a role in myoblast cell differentiation. In Homo sapiens (Human), this protein is mRNA decay activator protein ZFP36L1.